Consider the following 764-residue polypeptide: Hemocyte protein-glutamine gamma-glutamyltransferase (764 aa).

Catalysis depends on residues C343, H402, and D425. The Ca(2+) site is built by N465, D467, E522, and E527.

Belongs to the transglutaminase superfamily. Transglutaminase family. Ca(2+) serves as cofactor. In terms of tissue distribution, mainly expressed in hemocytes, hepatopancreas, and gastric tissues. On the other hand nothing was detected in the heart, intestine and muscle.

It is found in the membrane. The enzyme catalyses L-glutaminyl-[protein] + L-lysyl-[protein] = [protein]-L-lysyl-N(6)-5-L-glutamyl-[protein] + NH4(+). Functionally, catalyzes the cross-linking of proteins and the conjugation of polyamines to proteins. This Tachypleus tridentatus (Japanese horseshoe crab) protein is Hemocyte protein-glutamine gamma-glutamyltransferase.